A 437-amino-acid chain; its full sequence is Putative permease IIC component (437 aa).

The PTS EIIC type-2 domain maps to Phe-2 to Glu-437. Transmembrane regions (helical) follow at residues Ile-5 to Phe-25, Ala-35 to Asp-55, Ala-88 to Val-108, Leu-134 to Leu-154, Ile-173 to Ile-193, Gly-215 to Ala-235, Gly-236 to Phe-256, Thr-302 to Gly-322, Val-325 to His-345, Ile-354 to Phe-374, Phe-385 to Ile-405, and Ser-410 to Leu-430.

The protein resides in the cell inner membrane. In terms of biological role, the phosphoenolpyruvate-dependent sugar phosphotransferase system (PTS), a major carbohydrate active -transport system, catalyzes the phosphorylation of incoming sugar substrates concomitant with their translocation across the cell membrane. The polypeptide is Putative permease IIC component (sgcC) (Escherichia coli (strain K12)).